Reading from the N-terminus, the 423-residue chain is Putative galacturan 1,4-alpha-galacturonidase C (423 aa).

An N-terminal signal peptide occupies residues 1 to 20; that stretch reads MRFSIISLVSLPLFLGLTYA. Asparagine 100, asparagine 120, asparagine 150, asparagine 173, and asparagine 185 each carry an N-linked (GlcNAc...) asparagine glycan. The active-site Proton donor is aspartate 229. A disulfide bond links cysteine 231 and cysteine 248. N-linked (GlcNAc...) asparagine glycosylation is present at asparagine 245. Asparagine 252 is a catalytic residue. N-linked (GlcNAc...) asparagine glycosylation is found at asparagine 344 and asparagine 362. A disulfide bond links cysteine 379 and cysteine 385. Asparagine 400 carries an N-linked (GlcNAc...) asparagine glycan. A disulfide bond links cysteine 409 and cysteine 423.

The protein belongs to the glycosyl hydrolase 28 family.

It is found in the secreted. The catalysed reaction is [(1-&gt;4)-alpha-D-galacturonosyl](n) + H2O = alpha-D-galacturonate + [(1-&gt;4)-alpha-D-galacturonosyl](n-1). Functionally, specific in hydrolyzing the terminal glycosidic bond of polygalacturonic acid and oligogalacturonates. This Neosartorya fischeri (strain ATCC 1020 / DSM 3700 / CBS 544.65 / FGSC A1164 / JCM 1740 / NRRL 181 / WB 181) (Aspergillus fischerianus) protein is Putative galacturan 1,4-alpha-galacturonidase C (rgxC).